The chain runs to 90 residues: Probable Fe(2+)-trafficking protein (90 aa).

The protein belongs to the Fe(2+)-trafficking protein family.

Its function is as follows. Could be a mediator in iron transactions between iron acquisition and iron-requiring processes, such as synthesis and/or repair of Fe-S clusters in biosynthetic enzymes. In Pseudomonas fluorescens (strain SBW25), this protein is Probable Fe(2+)-trafficking protein.